A 440-amino-acid polypeptide reads, in one-letter code: D-serine dehydratase (440 aa).

The residue at position 116 (lysine 116) is an N6-(pyridoxal phosphate)lysine.

This sequence belongs to the serine/threonine dehydratase family. DsdA subfamily. In terms of assembly, monomer. Requires pyridoxal 5'-phosphate as cofactor.

It catalyses the reaction D-serine = pyruvate + NH4(+). In Salmonella choleraesuis (strain SC-B67), this protein is D-serine dehydratase.